A 298-amino-acid chain; its full sequence is Glycine--tRNA ligase alpha subunit (298 aa).

It belongs to the class-II aminoacyl-tRNA synthetase family. Tetramer of two alpha and two beta subunits.

Its subcellular location is the cytoplasm. The enzyme catalyses tRNA(Gly) + glycine + ATP = glycyl-tRNA(Gly) + AMP + diphosphate. This chain is Glycine--tRNA ligase alpha subunit, found in Neisseria meningitidis serogroup C / serotype 2a (strain ATCC 700532 / DSM 15464 / FAM18).